Consider the following 156-residue polypeptide: Ribonuclease ageritin (156 aa).

The N-terminal stretch at 1–21 (MSESSTFTTAVVPEGEGVAPM) is a signal peptide. H98 is a catalytic residue. N100 and N139 each carry an N-linked (GlcNAc...) asparagine glycan.

The protein belongs to the ribotoxin-like family. Monomer. It depends on Mg(2+) as a cofactor.

The protein localises to the vacuole lumen. It catalyses the reaction a 28S rRNA containing guanosine-adenosine pair + H2O = an [RNA fragment]-3'-adenosine-3'-phosphate + a 5'-a hydroxy-guanosine-3'-[RNA fragment].. Its activity is regulated as follows. In contrast to most ribotoxins, activity is completely inhibited by EDTA. Fungal ribonuclease involved in fungal defense. Highly specific and highly toxic fungal endonuclease that cleaves a single phosphodiester bond in the 28S RNA of eukaryotic ribosomes at a universally conserved GAGA tetraloop of the sarcin-ricin loop (SRL). The damage of the SRL inhibits the binding of translation elongation factors and halts protein biosynthesis, ultimately resulting in the death of the target cells. Shows antitumor activity. Exerts cytotoxicity and induces apoptosis towards rat glial cells and human glioma cells, and also displays some activity towards human neurolastoma cell lines. Shows a strong entomotoxicity against Aedes aegypti larvae, yet no nematotoxicity against nematodes. This Cyclocybe aegerita (Black poplar mushroom) protein is Ribonuclease ageritin.